The primary structure comprises 371 residues: Undecaprenyl-diphosphatase 1 (371 aa).

The next 3 helical transmembrane spans lie at 53 to 73, 100 to 120, and 126 to 146; these read PYLA…IVAF, LAWL…LLEH, and LGRP…MLLG. The disordered stretch occupies residues 152-226; sequence RSTTRGAPGP…PEAEDVTLPE (75 aa). Transmembrane regions (helical) follow at residues 291-311, 322-342, and 351-371; these read FAFL…LPDL, QTLF…RFLA, and TPFA…FGIF.

This sequence belongs to the UppP family.

It localises to the cell membrane. It carries out the reaction di-trans,octa-cis-undecaprenyl diphosphate + H2O = di-trans,octa-cis-undecaprenyl phosphate + phosphate + H(+). Catalyzes the dephosphorylation of undecaprenyl diphosphate (UPP). Confers resistance to bacitracin. In Frankia casuarinae (strain DSM 45818 / CECT 9043 / HFP020203 / CcI3), this protein is Undecaprenyl-diphosphatase 1.